A 147-amino-acid polypeptide reads, in one-letter code: Large ribosomal subunit protein bL9 (147 aa).

Belongs to the bacterial ribosomal protein bL9 family.

Binds to the 23S rRNA. The chain is Large ribosomal subunit protein bL9 from Clostridium tetani (strain Massachusetts / E88).